A 218-amino-acid chain; its full sequence is Cytochrome c biogenesis ATP-binding export protein CcmA (218 aa).

In terms of domain architecture, ABC transporter spans 12-217 (LHAEQLSSIR…KLSLEYRGEV (206 aa)). 44–51 (GPNGAGKS) lines the ATP pocket.

The protein belongs to the ABC transporter superfamily. CcmA exporter (TC 3.A.1.107) family. In terms of assembly, the complex is composed of two ATP-binding proteins (CcmA) and two transmembrane proteins (CcmB).

The protein resides in the cell inner membrane. It catalyses the reaction heme b(in) + ATP + H2O = heme b(out) + ADP + phosphate + H(+). In terms of biological role, part of the ABC transporter complex CcmAB involved in the biogenesis of c-type cytochromes; once thought to export heme, this seems not to be the case, but its exact role is uncertain. Responsible for energy coupling to the transport system. This Idiomarina loihiensis (strain ATCC BAA-735 / DSM 15497 / L2-TR) protein is Cytochrome c biogenesis ATP-binding export protein CcmA.